We begin with the raw amino-acid sequence, 442 residues long: Probable serine/threonine-protein kinase kinase DDB_G0280643 (442 aa).

In terms of domain architecture, Protein kinase spans 74–398; it reads IDPNTIVDCG…VNEILESPYF (325 aa). ATP is bound by residues 80–88 and lysine 103; that span reads VDCGTNGIM. Catalysis depends on aspartate 231, which acts as the Proton acceptor.

Belongs to the protein kinase superfamily. CMGC Ser/Thr protein kinase family. MAP kinase subfamily.

The catalysed reaction is L-seryl-[protein] + ATP = O-phospho-L-seryl-[protein] + ADP + H(+). The enzyme catalyses L-threonyl-[protein] + ATP = O-phospho-L-threonyl-[protein] + ADP + H(+). The protein is Probable serine/threonine-protein kinase kinase DDB_G0280643 of Dictyostelium discoideum (Social amoeba).